The primary structure comprises 893 residues: 26S proteasome non-ATPase regulatory subunit 2 (893 aa).

A disordered region spans residues 1–59 (MPQKEVTIPVPAKGGSNKEEDKKDNKDTEEKNTTTNTTTKDNKKDKKKDKKEETLSPED). 2 stretches are compositionally biased toward basic and acidic residues: residues 16-32 (SNKE…EEKN) and 40-59 (KDNK…SPED). 7 PC repeats span residues 412–445 (STVA…HCSN), 446–482 (GALM…GTRI), 483–517 (SAIF…KMEF), 522–555 (GLAL…ASES), 562–583 (LGLG…ETLK), 666–700 (AIPL…EVAQ), and 701–735 (GAIL…DVHL).

It belongs to the proteasome subunit S2 family.

Functionally, acts as a regulatory subunit of the 26 proteasome which is involved in the ATP-dependent degradation of ubiquitinated proteins. In Dictyostelium discoideum (Social amoeba), this protein is 26S proteasome non-ATPase regulatory subunit 2 (psmD2).